A 341-amino-acid polypeptide reads, in one-letter code: MFSSLLPKPKYSSHEPTSRIKLKKVRAHEKSNQLVKLPENKSDIKVTHNPSNSESTISQLHLNPDGTLNYNLTIASSNSNSRKVQSSYEDTIPLKVKFPNLKHHFPRYTVETCPDDSLKECVEDTKAAINKMINEKMGVDEKTNNKKDDVTYIKYTSNNLVNDPEGSDDERGRERIIQIRNYQEDPMLPPKFKLRKNRHKNPSPPPPLLKSSNNEQTSKLTKEDQAKWQIPSAISNWKNNQGFTISLDKRMVAANGGSELATNDVNLEKFGELSQALENADKQAREEIKIRSEMLKQLAIKEQHEKENKLKELADIARSKKLNNKRPPNGDYDDVKKKTKY.

Disordered stretches follow at residues 1–31 (MFSSLLPKPKYSSHEPTSRIKLKKVRAHEKS), 181–226 (NYQE…EDQA), and 302–341 (EQHEKENKLKELADIARSKKLNNKRPPNGDYDDVKKKTKY). Residues 192–201 (FKLRKNRHKN) are compositionally biased toward basic residues. The span at 302–318 (EQHEKENKLKELADIAR) shows a compositional bias: basic and acidic residues.

It belongs to the SNW family. Associated with the spliceosome.

It is found in the nucleus. Functionally, involved in pre-mRNA splicing. This is Pre-mRNA-processing protein 45 (PRP45) from Debaryomyces hansenii (strain ATCC 36239 / CBS 767 / BCRC 21394 / JCM 1990 / NBRC 0083 / IGC 2968) (Yeast).